The primary structure comprises 208 residues: MPSVFVQGRPTASYPPFAPEAGRGAVRRVTEVGEEVLHRPCRDVTEFGPDLAALIDDMFRTMYVAEGAGLAANQVGVDLRLFVYDCPDDEGVRHVGHLVNPVLDALDPAARRLLDEGEGCLSVPGAVMAVPRPDRAVVRGLDKDGVPLLVEGTGYFARCLAHETDHVNGHVYLDRLSGRERKAALRQSADRREEVFARRAANAAAFAA.

2 residues coordinate Fe cation: cysteine 120 and histidine 162. Residue glutamate 163 is part of the active site. Histidine 166 lines the Fe cation pocket.

This sequence belongs to the polypeptide deformylase family. Fe(2+) is required as a cofactor.

The catalysed reaction is N-terminal N-formyl-L-methionyl-[peptide] + H2O = N-terminal L-methionyl-[peptide] + formate. Removes the formyl group from the N-terminal Met of newly synthesized proteins. Requires at least a dipeptide for an efficient rate of reaction. N-terminal L-methionine is a prerequisite for activity but the enzyme has broad specificity at other positions. The sequence is that of Peptide deformylase 3 from Streptomyces coelicolor (strain ATCC BAA-471 / A3(2) / M145).